The primary structure comprises 459 residues: Phosphoglucosamine mutase (459 aa).

Residue serine 102 is the Phosphoserine intermediate of the active site. Mg(2+) contacts are provided by serine 102, aspartate 243, aspartate 245, and aspartate 247. At serine 102 the chain carries Phosphoserine.

The protein belongs to the phosphohexose mutase family. The cofactor is Mg(2+). Activated by phosphorylation.

The enzyme catalyses alpha-D-glucosamine 1-phosphate = D-glucosamine 6-phosphate. Functionally, catalyzes the conversion of glucosamine-6-phosphate to glucosamine-1-phosphate. The sequence is that of Phosphoglucosamine mutase from Bartonella henselae (strain ATCC 49882 / DSM 28221 / CCUG 30454 / Houston 1) (Rochalimaea henselae).